The primary structure comprises 20 residues: Unknown protein NF009 from 2D-PAGE (20 aa).

A disordered region spans residues 1-20 (ATSAAQGAALDESVRKVLKP).

This chain is Unknown protein NF009 from 2D-PAGE, found in Naegleria fowleri (Brain eating amoeba).